A 98-amino-acid polypeptide reads, in one-letter code: uncharacterized protein (98 aa).

The protein belongs to the HesB/IscA family.

This is an uncharacterized protein from Staphylococcus epidermidis (strain ATCC 35984 / DSM 28319 / BCRC 17069 / CCUG 31568 / BM 3577 / RP62A).